The primary structure comprises 304 residues: HPr kinase/phosphorylase (304 aa).

Active-site residues include H136 and K157. G151–S158 serves as a coordination point for ATP. S158 contributes to the Mg(2+) binding site. The active-site Proton acceptor; for phosphorylation activity. Proton donor; for dephosphorylation activity is the D175. The tract at residues L198–D207 is important for the catalytic mechanism of both phosphorylation and dephosphorylation. E199 lines the Mg(2+) pocket. Residue R240 is part of the active site. The important for the catalytic mechanism of dephosphorylation stretch occupies residues P261–R266.

It belongs to the HPrK/P family. Homohexamer. Mg(2+) serves as cofactor.

It carries out the reaction [HPr protein]-L-serine + ATP = [HPr protein]-O-phospho-L-serine + ADP + H(+). The catalysed reaction is [HPr protein]-O-phospho-L-serine + phosphate + H(+) = [HPr protein]-L-serine + diphosphate. In terms of biological role, catalyzes the ATP- as well as the pyrophosphate-dependent phosphorylation of a specific serine residue in HPr, a phosphocarrier protein of the phosphoenolpyruvate-dependent sugar phosphotransferase system (PTS). HprK/P also catalyzes the pyrophosphate-producing, inorganic phosphate-dependent dephosphorylation (phosphorolysis) of seryl-phosphorylated HPr (P-Ser-HPr). The two antagonistic activities of HprK/P are regulated by several intracellular metabolites, which change their concentration in response to the absence or presence of rapidly metabolisable carbon sources (glucose, fructose, etc.) in the growth medium. Therefore, by controlling the phosphorylation state of HPr, HPrK/P is a sensor enzyme that plays a major role in the regulation of carbon metabolism and sugar transport: it mediates carbon catabolite repression (CCR), and regulates PTS-catalyzed carbohydrate uptake and inducer exclusion. This Clostridium botulinum (strain Eklund 17B / Type B) protein is HPr kinase/phosphorylase.